The chain runs to 386 residues: Succinate--CoA ligase [ADP-forming] subunit beta (386 aa).

The region spanning 9–244 is the ATP-grasp domain; it reads KEVLRKYGVA…LDEEDPKEIE (236 aa). ATP-binding positions include Lys46, 53-55, Glu99, Cys102, and Glu107; that span reads GRG. 2 residues coordinate Mg(2+): Asn199 and Asp213. Substrate is bound by residues Asn264 and 321–323; that span reads GIM.

This sequence belongs to the succinate/malate CoA ligase beta subunit family. Heterotetramer of two alpha and two beta subunits. Requires Mg(2+) as cofactor.

It catalyses the reaction succinate + ATP + CoA = succinyl-CoA + ADP + phosphate. It carries out the reaction GTP + succinate + CoA = succinyl-CoA + GDP + phosphate. It functions in the pathway carbohydrate metabolism; tricarboxylic acid cycle; succinate from succinyl-CoA (ligase route): step 1/1. In terms of biological role, succinyl-CoA synthetase functions in the citric acid cycle (TCA), coupling the hydrolysis of succinyl-CoA to the synthesis of either ATP or GTP and thus represents the only step of substrate-level phosphorylation in the TCA. The beta subunit provides nucleotide specificity of the enzyme and binds the substrate succinate, while the binding sites for coenzyme A and phosphate are found in the alpha subunit. The polypeptide is Succinate--CoA ligase [ADP-forming] subunit beta (Bacillus licheniformis (strain ATCC 14580 / DSM 13 / JCM 2505 / CCUG 7422 / NBRC 12200 / NCIMB 9375 / NCTC 10341 / NRRL NRS-1264 / Gibson 46)).